The sequence spans 88 residues: Small ribosomal subunit protein uS17 (88 aa).

Belongs to the universal ribosomal protein uS17 family. In terms of assembly, part of the 30S ribosomal subunit.

Functionally, one of the primary rRNA binding proteins, it binds specifically to the 5'-end of 16S ribosomal RNA. This is Small ribosomal subunit protein uS17 from Dechloromonas aromatica (strain RCB).